The primary structure comprises 151 residues: Large ribosomal subunit protein bL9 (151 aa).

It belongs to the bacterial ribosomal protein bL9 family.

Binds to the 23S rRNA. The sequence is that of Large ribosomal subunit protein bL9 from Mycolicibacterium vanbaalenii (strain DSM 7251 / JCM 13017 / BCRC 16820 / KCTC 9966 / NRRL B-24157 / PYR-1) (Mycobacterium vanbaalenii).